A 644-amino-acid polypeptide reads, in one-letter code: Chaperone protein HscA (644 aa).

The protein belongs to the heat shock protein 70 family.

Chaperone involved in the maturation of iron-sulfur cluster-containing proteins. Has a low intrinsic ATPase activity which is markedly stimulated by HscB. Involved in the maturation of IscU. The sequence is that of Chaperone protein HscA from Yersinia pseudotuberculosis serotype I (strain IP32953).